The sequence spans 341 residues: Calcium-binding protein 39 (341 aa).

The protein belongs to the Mo25 family. Component of a trimeric complex composed of STK11/LKB1, STRAD (STRADA or STRADB) and CAB39/MO25 (CAB39/MO25alpha or CAB39L/MO25beta): the complex tethers STK11/LKB1 in the cytoplasm and stimulates its catalytic activity.

It localises to the cytoplasm. In terms of biological role, component of a complex that binds and activates STK11/LKB1. In the complex, required to stabilize the interaction between CAB39/MO25 (CAB39/MO25alpha or CAB39L/MO25beta) and STK11/LKB1. This Bos taurus (Bovine) protein is Calcium-binding protein 39 (CAB39).